A 265-amino-acid polypeptide reads, in one-letter code: Mlc titration factor A (265 aa).

Residues His111, His148, His152, and Glu211 each coordinate Zn(2+).

Belongs to the MtfA family. Interacts with Mlc. Zn(2+) serves as cofactor.

Its subcellular location is the cytoplasm. Its function is as follows. Involved in the modulation of the activity of the glucose-phosphotransferase system (glucose-PTS). Interacts with the transcriptional repressor Mlc, preventing its interaction with DNA and leading to the modulation of expression of genes regulated by Mlc, including ptsG, which encodes the PTS system glucose-specific EIICB component. Functionally, shows zinc-dependent metallopeptidase activity. The sequence is that of Mlc titration factor A from Escherichia coli (strain 55989 / EAEC).